Here is a 122-residue protein sequence, read N- to C-terminus: Sperm-egg fusion protein LLCFC1 (122 aa).

The N-terminal stretch at 1-28 (MPPLAPQLCRAVFLVPILLLLQVKPLNG) is a signal peptide. The tract at residues 27-51 (NGSPGPKDGSQTEKTPSADQNQEQF) is disordered. Residues 38 to 49 (TEKTPSADQNQE) are compositionally biased toward polar residues.

The protein resides in the secreted. Sperm protein required for fusion of sperm with the egg membrane during fertilization. This is Sperm-egg fusion protein LLCFC1 from Homo sapiens (Human).